Here is a 599-residue protein sequence, read N- to C-terminus: Elongation factor 4 (599 aa).

The region spanning 5–187 (SKIRNFSIVA…AIVKRLPAPT (183 aa)) is the tr-type G domain. GTP-binding positions include 17 to 22 (DHGKST) and 134 to 137 (NKID).

It belongs to the TRAFAC class translation factor GTPase superfamily. Classic translation factor GTPase family. LepA subfamily.

The protein resides in the cell inner membrane. The catalysed reaction is GTP + H2O = GDP + phosphate + H(+). Its function is as follows. Required for accurate and efficient protein synthesis under certain stress conditions. May act as a fidelity factor of the translation reaction, by catalyzing a one-codon backward translocation of tRNAs on improperly translocated ribosomes. Back-translocation proceeds from a post-translocation (POST) complex to a pre-translocation (PRE) complex, thus giving elongation factor G a second chance to translocate the tRNAs correctly. Binds to ribosomes in a GTP-dependent manner. The sequence is that of Elongation factor 4 from Ruegeria sp. (strain TM1040) (Silicibacter sp.).